A 356-amino-acid chain; its full sequence is MSSTHLPGGNQALLGCSATELESWAVAEGQPAFRGRQLHDWLYAKGARSFDAITVLPKSWRISLQQRGLTIGRLLEVNRAVAVDDTTKLLLATVDGETIESVGIPTQQRLTVCLSSQVGCPMACRFCASGKGGLQRSLATHEIVDQVLSLREAMDRRPSHVVFMGMGEPLLNIEAVLASIRCLNIDLGIAQRRITVSTVGVPHTLPQLAELAMKRLGRAQFTLAVSLHAPNQELRERLIPTACAYPFETLLQDCRHYLAVTGRRVTFEYILLGALNDQPQHAEELAERVRGFQSHVNLIAYNPIDDEGFQRPNPETIEAFRRVLEQRGVAVSLRASRGLDQNAACGQLRRQHAAIG.

E100 acts as the Proton acceptor in catalysis. The region spanning 106-340 (TQQRLTVCLS…VSLRASRGLD (235 aa)) is the Radical SAM core domain. A disulfide bond links C113 and C345. Residues C120, C124, and C127 each coordinate [4Fe-4S] cluster. Residues 167 to 168 (GE), S197, 226 to 228 (SLH), and N302 contribute to the S-adenosyl-L-methionine site. Catalysis depends on C345, which acts as the S-methylcysteine intermediate.

Belongs to the radical SAM superfamily. RlmN family. It depends on [4Fe-4S] cluster as a cofactor.

It localises to the cytoplasm. The enzyme catalyses adenosine(2503) in 23S rRNA + 2 reduced [2Fe-2S]-[ferredoxin] + 2 S-adenosyl-L-methionine = 2-methyladenosine(2503) in 23S rRNA + 5'-deoxyadenosine + L-methionine + 2 oxidized [2Fe-2S]-[ferredoxin] + S-adenosyl-L-homocysteine. It catalyses the reaction adenosine(37) in tRNA + 2 reduced [2Fe-2S]-[ferredoxin] + 2 S-adenosyl-L-methionine = 2-methyladenosine(37) in tRNA + 5'-deoxyadenosine + L-methionine + 2 oxidized [2Fe-2S]-[ferredoxin] + S-adenosyl-L-homocysteine. Functionally, specifically methylates position 2 of adenine 2503 in 23S rRNA and position 2 of adenine 37 in tRNAs. This Prochlorococcus marinus (strain MIT 9303) protein is Probable dual-specificity RNA methyltransferase RlmN.